Reading from the N-terminus, the 57-residue chain is Catalase-1 (57 aa).

Heme is bound at residue Tyr-37.

As to quaternary structure, homodimer. Heme serves as cofactor.

The enzyme catalyses 2 H2O2 = O2 + 2 H2O. Functionally, decomposes hydrogen peroxide into water and oxygen; serves to protect cells from the toxic effects of hydrogen peroxide. The polypeptide is Catalase-1 (Comamonas terrigena).